Reading from the N-terminus, the 192-residue chain is Inosine triphosphate pyrophosphatase (192 aa).

10–15 serves as a coordination point for ITP; the sequence is TGNANK. Glutamate 43 serves as a coordination point for Mg(2+). ITP-binding positions include lysine 56, 74–75, lysine 91, 149–152, lysine 173, and 178–179; these read DT, FGWD, and HR.

The protein belongs to the HAM1 NTPase family. In terms of assembly, homodimer. It depends on Mg(2+) as a cofactor. The cofactor is Mn(2+).

The protein localises to the cytoplasm. Its subcellular location is the nucleus. The catalysed reaction is ITP + H2O = IMP + diphosphate + H(+). The enzyme catalyses dITP + H2O = dIMP + diphosphate + H(+). It carries out the reaction XTP + H2O = XMP + diphosphate + H(+). Its function is as follows. Pyrophosphatase that hydrolyzes non-canonical purine nucleotides such as inosine triphosphate (ITP), deoxyinosine triphosphate (dITP) or xanthosine 5'-triphosphate (XTP) to their respective monophosphate derivatives. The enzyme does not distinguish between the deoxy- and ribose forms. Probably excludes non-canonical purines from RNA and DNA precursor pools, thus preventing their incorporation into RNA and DNA and avoiding chromosomal lesions. This Candida glabrata (strain ATCC 2001 / BCRC 20586 / JCM 3761 / NBRC 0622 / NRRL Y-65 / CBS 138) (Yeast) protein is Inosine triphosphate pyrophosphatase.